Reading from the N-terminus, the 261-residue chain is MRILITNDDGINAPGLEVLEQIALELAGPDGEVWTVAPAFEQSGVSHAISYTHPMMIAKLGPRRYAAEGSPADCVLAALYDVLQGARPDLVLSGVNRGNNSAENVLYSGTVGGALEAALQGLPAIALSQFLGPETEGLADPFECARTHGARIVRLLLERGLWDGEDYRLFYNVNFPPVPAANLRGHRVAAQGFRRDTSFGVEPHMSPSGRRFLWIRGGAQQSPTLPGTDAAVNLEGFVSITPLRADLTAHDRLAELEALIG.

D8, D9, S43, and N96 together coordinate a divalent metal cation.

This sequence belongs to the SurE nucleotidase family. A divalent metal cation is required as a cofactor.

The protein resides in the cytoplasm. The catalysed reaction is a ribonucleoside 5'-phosphate + H2O = a ribonucleoside + phosphate. In terms of biological role, nucleotidase that shows phosphatase activity on nucleoside 5'-monophosphates. This is 5'-nucleotidase SurE from Cereibacter sphaeroides (strain KD131 / KCTC 12085) (Rhodobacter sphaeroides).